Consider the following 196-residue polypeptide: Serine recombinase PinQ (196 aa).

The region spanning 3–143 is the Resolvase/invertase-type recombinase catalytic domain; it reads QIFAYCRIST…SGIVRARGAG (141 aa). S11 acts as the O-(5'-phospho-DNA)-serine intermediate in catalysis.

It belongs to the site-specific recombinase resolvase family.

In Escherichia coli (strain K12), this protein is Serine recombinase PinQ (pinQ).